Consider the following 721-residue polypeptide: Protein mu-NS (721 aa).

The tract at residues methionine 1 to proline 13 is interaction with sigma-NS. Residues methionine 1–proline 38 form an RNA-binding region. The tract at residues valine 14–aspartate 40 is interaction with mu-2. Positions threonine 17 to serine 37 are disordered. Residues glutamine 471–leucine 721 form an involved in the formation of factory-like inclusions region. Coiled-coil stretches lie at residues leucine 523–lysine 556 and lysine 632–glutamine 686.

It belongs to the orthoreovirus mu-NS protein family. Interacts with mu-2. Interacts with sigma-NS; in viral factories. Interacts with the inner capsid proteins lambda-1 and sigma-2, and outer capsid protein lambda-2; in viral factories. The N-terminus is blocked.

It is found in the host cytoplasm. Its function is as follows. Non-structural protein implicated with protein sigma-NS in forming the matrix of viral factories, which are large inclusions in the host cytoplasm where replication intermediates are assembled and viral RNA replication takes place. Together with mu-2, recruits the other core proteins to these factories. This is Protein mu-NS (M3) from Mammalia (T2J).